A 39-amino-acid chain; its full sequence is Photosystem II reaction center protein J (39 aa).

Residues 7 to 27 (IPLWLVGLVGGLAVITMLSLF) traverse the membrane as a helical segment.

It belongs to the PsbJ family. As to quaternary structure, PSII is composed of 1 copy each of membrane proteins PsbA, PsbB, PsbC, PsbD, PsbE, PsbF, PsbH, PsbI, PsbJ, PsbK, PsbL, PsbM, PsbT, PsbX, PsbY, PsbZ, Psb30/Ycf12, at least 3 peripheral proteins of the oxygen-evolving complex and a large number of cofactors. It forms dimeric complexes.

The protein resides in the plastid. It localises to the chloroplast thylakoid membrane. In terms of biological role, one of the components of the core complex of photosystem II (PSII). PSII is a light-driven water:plastoquinone oxidoreductase that uses light energy to abstract electrons from H(2)O, generating O(2) and a proton gradient subsequently used for ATP formation. It consists of a core antenna complex that captures photons, and an electron transfer chain that converts photonic excitation into a charge separation. The protein is Photosystem II reaction center protein J of Trieres chinensis (Marine centric diatom).